We begin with the raw amino-acid sequence, 284 residues long: Cuticle collagen dpy-5 (284 aa).

A disordered region spans residues 88 to 284 (GLPSQGCPAG…PCPERKRRRV (197 aa)). 2 triple-helical region regions span residues 94-126 (CPAG…PGLN) and 143-270 (GPPG…VGAD). Residues 106 to 115 (GEPGGTGPDG) show a composition bias toward gly residues. Residues 163–177 (AGKRGTPGKDGEPGR) show a composition bias toward basic and acidic residues. Low complexity-rich tracts occupy residues 181 to 193 (IGDQ…DGQP), 224 to 246 (EPGN…TGQP), and 255 to 271 (DGTP…GADA).

Belongs to the cuticular collagen family. In terms of assembly, collagen polypeptide chains are complexed within the cuticle by disulfide bonds and other types of covalent cross-links. May be a substrate of bli-4.

Nematode cuticles are composed largely of collagen-like proteins. The cuticle functions both as an exoskeleton and as a barrier to protect the worm from its environment. The sequence is that of Cuticle collagen dpy-5 (dpy-5) from Caenorhabditis elegans.